Here is a 388-residue protein sequence, read N- to C-terminus: Protein SopA (388 aa).

It belongs to the ParA family.

Functionally, this protein is essential for plasmid partition. It ensures the proper distribution of newly replicated plasmids to daughter cells during cell division. SopA is trans-acting. The chain is Protein SopA (sopA) from Escherichia coli O157:H7.